The sequence spans 275 residues: 3-methyl-2-oxobutanoate hydroxymethyltransferase (275 aa).

2 residues coordinate Mg(2+): Asp-49 and Asp-88. Residues 49 to 50, Asp-88, and Lys-118 each bind 3-methyl-2-oxobutanoate; that span reads DS. Glu-120 contacts Mg(2+). Glu-187 acts as the Proton acceptor in catalysis.

It belongs to the PanB family. Homodecamer; pentamer of dimers. It depends on Mg(2+) as a cofactor.

It is found in the cytoplasm. It carries out the reaction 3-methyl-2-oxobutanoate + (6R)-5,10-methylene-5,6,7,8-tetrahydrofolate + H2O = 2-dehydropantoate + (6S)-5,6,7,8-tetrahydrofolate. Its pathway is cofactor biosynthesis; (R)-pantothenate biosynthesis; (R)-pantoate from 3-methyl-2-oxobutanoate: step 1/2. Catalyzes the reversible reaction in which hydroxymethyl group from 5,10-methylenetetrahydrofolate is transferred onto alpha-ketoisovalerate to form ketopantoate. The protein is 3-methyl-2-oxobutanoate hydroxymethyltransferase of Rhodospirillum centenum (strain ATCC 51521 / SW).